The sequence spans 881 residues: Sodium/potassium/calcium exchanger Nckx30C (881 aa).

At 1–194 (MLQPTTCSKQ…SRCRSRRCLR (194 aa)) the chain is on the extracellular side. N-linked (GlcNAc...) asparagine glycosylation is present at Asn-69. Disordered stretches follow at residues 79–111 (DMLS…APSD), 149–181 (AKTR…LLHP), 215–255 (AAKP…TSGE), and 272–315 (GLEE…TTKT). The span at 85–95 (RSRSSSTTIDF) shows a compositional bias: polar residues. Residues 149–175 (AKTRSRTAAQLPATSAASATSSRGASA) are compositionally biased toward low complexity. Residues 195–215 (LPIYSILLLCLTTQGLGLGDA) traverse the membrane as a helical segment. At 216–330 (AKPRPAKQHF…DLFTKEQLEN (115 aa)) the chain is on the cytoplasmic side. Residues 228 to 240 (SNSNSPNQNQNHN) show a composition bias toward low complexity. A compositionally biased stretch (polar residues) spans 296-315 (AGNQRGINDTHNDNSTTTKT). Residues 331 to 351 (GAVILHIIGVIYMFVALAIVC) form a helical membrane-spanning segment. Over 352 to 375 (DEFFVPSLDVIIEKLGITDDVAGA) the chain is Extracellular. An Alpha-1 repeat occupies 372 to 412 (VAGATFMAAGGSAPELFTSVIGVFVSFDDVGIGTIVGSAVF). Residues 376–396 (TFMAAGGSAPELFTSVIGVFV) traverse the membrane as a helical segment. At 397–402 (SFDDVG) the chain is on the cytoplasmic side. A helical transmembrane segment spans residues 403–423 (IGTIVGSAVFNILFVIGMCAL). The Extracellular portion of the chain corresponds to 424–433 (FSKTVLSLTW). Residues 434 to 454 (WPLFRDCSFYSISLLVLIYFF) form a helical membrane-spanning segment. At 455–458 (RDNR) the chain is on the cytoplasmic side. A helical transmembrane segment spans residues 459–479 (IFWWEALILFTIYIGYVAFMK). Over 480–720 (WNVQVETCVK…PDTRTPRGKR (241 aa)) the chain is Extracellular. The segment at 508-565 (PAGNAANSSETSMATQPGGSVTSRAASETRSGPPGSSNAGATGNSSGGGGTSGSTQTG) is disordered. Residues 512-537 (AANSSETSMATQPGGSVTSRAASETR) are compositionally biased toward polar residues. Asn-514 and Asn-551 each carry an N-linked (GlcNAc...) asparagine glycan. Over residues 542 to 551 (GSSNAGATGN) the composition is skewed to low complexity. The helical transmembrane segment at 721-741 (FFPVTFIGSIVWIAAFSYLMV) threads the bilayer. Topologically, residues 742–756 (WWANVAGDTARIPPE) are cytoplasmic. A helical membrane pass occupies residues 757 to 777 (VMGLTFLAAGTSIPDLITSVI). An Alpha-2 repeat occupies 764-795 (AAGTSIPDLITSVIVARKGFGDMAVSSSVGSN). The Extracellular portion of the chain corresponds to 778–795 (VARKGFGDMAVSSSVGSN). A helical transmembrane segment spans residues 796 to 816 (IFDVTVGLPIPWLLYGIIYGA). At 817–822 (PVEVNS) the chain is on the cytoplasmic side. The chain crosses the membrane as a helical span at residues 823–843 (VGMVCSITILFMMLVFVVMSI). The Extracellular portion of the chain corresponds to 844 to 852 (ACFRWRMNK). Residues 853–873 (GLGFTMFLLYFAFVAVSLMFE) traverse the membrane as a helical segment. Topologically, residues 874–881 (YDVITCPF) are cytoplasmic.

The protein belongs to the Ca(2+):cation antiporter (CaCA) (TC 2.A.19) family. SLC24A subfamily. Expressed in the adult nervous system. Expressed in the photoreceptor cells as well as in the lamina, medulla, and optic lobes of the brain.

It is found in the membrane. May function in the removal and maintenance of calcium homeostasis during signaling in the adult and in signaling events during embryogenesis and patterning of imaginal disks. Transports one Ca(2+) and 1 K(+) in exchange for 4 Na(+). In Drosophila melanogaster (Fruit fly), this protein is Sodium/potassium/calcium exchanger Nckx30C (Nckx30C).